A 207-amino-acid chain; its full sequence is Ribosomal RNA small subunit methyltransferase G (207 aa).

S-adenosyl-L-methionine-binding positions include glycine 75, leucine 80, 126 to 127 (VE), and arginine 141.

This sequence belongs to the methyltransferase superfamily. RNA methyltransferase RsmG family.

It localises to the cytoplasm. The enzyme catalyses guanosine(527) in 16S rRNA + S-adenosyl-L-methionine = N(7)-methylguanosine(527) in 16S rRNA + S-adenosyl-L-homocysteine. Functionally, specifically methylates the N7 position of guanine in position 527 of 16S rRNA. This Psychromonas ingrahamii (strain DSM 17664 / CCUG 51855 / 37) protein is Ribosomal RNA small subunit methyltransferase G.